The primary structure comprises 97 residues: Osteocalcin (97 aa).

The first 20 residues, 1–20 (MKAAALLLLAALLTFSLCRS), serve as a signal peptide directing secretion. Positions 21–48 (APDGSDARSAKAFISHRQRAEMVRRQKR) are excised as a propeptide. A Gla domain is found at 49–95 (HYAQDSGVAGAPPNPLEAQREVCELSPDCDELADQIGFQEAYRRFYG). Ca(2+) contacts are provided by Glu65, Glu69, Glu72, and Asp78. A 4-carboxyglutamate mark is found at Glu65, Glu69, and Glu72. Cys71 and Cys77 form a disulfide bridge.

The protein belongs to the osteocalcin/matrix Gla protein family. In terms of processing, gamma-carboxyglutamate residues are formed by vitamin K dependent carboxylation by GGCX. These residues are essential for the binding of calcium.

It is found in the secreted. The carboxylated form is one of the main organic components of the bone matrix, which constitutes 1-2% of the total bone protein. The carboxylated form binds strongly to apatite and calcium. This is Osteocalcin (BGLAP) from Gallus gallus (Chicken).